The primary structure comprises 289 residues: F-actin-capping protein subunit beta (289 aa).

The interval 73-110 is disordered; the sequence is RSPWSNQFDPPLEGGNQGGSGGDGEGDGGEGGAAGSIM. Over residues 87–106 the composition is skewed to gly residues; sequence GNQGGSGGDGEGDGGEGGAA.

The protein belongs to the F-actin-capping protein beta subunit family. In terms of assembly, component of the F-actin capping complex, composed of a heterodimer of an alpha and a beta subunit.

It is found in the cytoplasm. The protein localises to the cytoskeleton. It localises to the actin patch. Its function is as follows. F-actin-capping proteins bind in a Ca(2+)-independent manner to the fast growing ends of actin filaments (barbed end) thereby blocking the exchange of subunits at these ends. Unlike other capping proteins (such as gelsolin and severin), these proteins do not sever actin filaments. In Neurospora crassa (strain ATCC 24698 / 74-OR23-1A / CBS 708.71 / DSM 1257 / FGSC 987), this protein is F-actin-capping protein subunit beta (fac-2).